A 116-amino-acid chain; its full sequence is Large ribosomal subunit protein bL19 (116 aa).

This sequence belongs to the bacterial ribosomal protein bL19 family.

This protein is located at the 30S-50S ribosomal subunit interface and may play a role in the structure and function of the aminoacyl-tRNA binding site. The sequence is that of Large ribosomal subunit protein bL19 from Streptomyces avermitilis (strain ATCC 31267 / DSM 46492 / JCM 5070 / NBRC 14893 / NCIMB 12804 / NRRL 8165 / MA-4680).